The following is a 213-amino-acid chain: Redox-sensing transcriptional repressor Rex (213 aa).

The segment at residues Leu-18–Phe-57 is a DNA-binding region (H-T-H motif). Gly-92–Gly-97 is an NAD(+) binding site.

This sequence belongs to the transcriptional regulatory Rex family. As to quaternary structure, homodimer.

The protein resides in the cytoplasm. In terms of biological role, modulates transcription in response to changes in cellular NADH/NAD(+) redox state. This is Redox-sensing transcriptional repressor Rex from Staphylococcus saprophyticus subsp. saprophyticus (strain ATCC 15305 / DSM 20229 / NCIMB 8711 / NCTC 7292 / S-41).